Here is a 461-residue protein sequence, read N- to C-terminus: Thyroid hormone receptor beta (461 aa).

A disordered region spans residues 1–24 (MTPNSMTENGLPAWDKQKPRPDRG). The interval 1–106 (MTPNSMTENG…IPSYLDKDEL (106 aa)) is modulating. Residues 15–24 (DKQKPRPDRG) are compositionally biased toward basic and acidic residues. Positions 107, 110, 124, 127, 145, 151, 161, and 164 each coordinate Zn(2+). 2 NR C4-type zinc fingers span residues 107–127 (CVVCGDKATGYHYRCITCEGC) and 145–169 (CKYEGKCIIDKVTRNQCQECRFKKC). Residues 107-181 (CVVCGDKATG…VGMATDLVLD (75 aa)) constitute a DNA-binding region (nuclear receptor). The region spanning 217-461 (EEWELIKTVT…PPLFLEVFED (245 aa)) is the NR LBD domain. The segment at 244-461 (KFLPEDIGQA…PPLFLEVFED (218 aa)) is interaction with NR2F6. Residues R282, N331, and H435 each coordinate 3,3',5-triiodo-L-thyronine. 3 residues coordinate L-thyroxine: R282, N331, and H435.

This sequence belongs to the nuclear hormone receptor family. NR1 subfamily. Binds DNA as a dimer; homodimer and heterodimer with RXRB. Interacts with the coactivators NCOA1/SRC1, NCOA2/GRIP1, NCOA7 and MED1/TRAP220 in a ligand-inducible manner. Interacts with the corepressor NCOR1 in absence of ligand. Interacts with C1D. Interacts with NR2F6; the interaction impairs the binding of the THRB homodimer and THRB:RXRB heterodimer to T3 response elements. Interacts with PRMT2 and THRSP. Interacts with TACC1; this interaction is decreased in the presence of thyroid hormone T3.

The protein resides in the nucleus. Nuclear hormone receptor that can act as a repressor or activator of transcription. High affinity receptor for thyroid hormones, including triiodothyronine and thyroxine. This chain is Thyroid hormone receptor beta (Thrb), found in Mus musculus (Mouse).